A 463-amino-acid chain; its full sequence is ATP-dependent protease ATPase subunit HslU (463 aa).

Residues Val-21, 63 to 68, Asp-276, Glu-341, and Arg-413 contribute to the ATP site; that span reads GVGKTE.

The protein belongs to the ClpX chaperone family. HslU subfamily. A double ring-shaped homohexamer of HslV is capped on each side by a ring-shaped HslU homohexamer. The assembly of the HslU/HslV complex is dependent on binding of ATP.

It localises to the cytoplasm. Functionally, ATPase subunit of a proteasome-like degradation complex; this subunit has chaperone activity. The binding of ATP and its subsequent hydrolysis by HslU are essential for unfolding of protein substrates subsequently hydrolyzed by HslV. HslU recognizes the N-terminal part of its protein substrates and unfolds these before they are guided to HslV for hydrolysis. The polypeptide is ATP-dependent protease ATPase subunit HslU (Thermotoga neapolitana (strain ATCC 49049 / DSM 4359 / NBRC 107923 / NS-E)).